The following is a 77-amino-acid chain: MISKEKIARINELAQKAKSNTITDEEKAEQQKLRQEYLKGFRSSMKNTLKSVKVIDPEGNDVTPEKLKREQQKNNLH.

The segment at 55 to 77 is disordered; that stretch reads IDPEGNDVTPEKLKREQQKNNLH. Residues 63–77 show a composition bias toward basic and acidic residues; that stretch reads TPEKLKREQQKNNLH.

It belongs to the UPF0291 family.

The protein resides in the cytoplasm. The protein is UPF0291 protein RBAM_017680 of Bacillus velezensis (strain DSM 23117 / BGSC 10A6 / LMG 26770 / FZB42) (Bacillus amyloliquefaciens subsp. plantarum).